The following is a 360-amino-acid chain: UDP-3-O-acylglucosamine N-acyltransferase (360 aa).

The active-site Proton acceptor is H256. The disordered stretch occupies residues 341–360 (EGSGAETAARPDDDRDEGRG). The span at 349-360 (ARPDDDRDEGRG) shows a compositional bias: basic and acidic residues.

This sequence belongs to the transferase hexapeptide repeat family. LpxD subfamily. As to quaternary structure, homotrimer.

It catalyses the reaction a UDP-3-O-[(3R)-3-hydroxyacyl]-alpha-D-glucosamine + a (3R)-hydroxyacyl-[ACP] = a UDP-2-N,3-O-bis[(3R)-3-hydroxyacyl]-alpha-D-glucosamine + holo-[ACP] + H(+). The protein operates within bacterial outer membrane biogenesis; LPS lipid A biosynthesis. Its function is as follows. Catalyzes the N-acylation of UDP-3-O-acylglucosamine using 3-hydroxyacyl-ACP as the acyl donor. Is involved in the biosynthesis of lipid A, a phosphorylated glycolipid that anchors the lipopolysaccharide to the outer membrane of the cell. The sequence is that of UDP-3-O-acylglucosamine N-acyltransferase from Rhodopseudomonas palustris (strain TIE-1).